Consider the following 74-residue polypeptide: MNVKILLLLVGLNLVMHSNATGDSETNPAETLFIEEIFRRGCFKEGKWCPKSAPCCAPLKCKGPSIKQQKCVRE.

Residues 1 to 20 form the signal peptide; that stretch reads MNVKILLLLVGLNLVMHSNA. Positions 21–40 are excised as a propeptide; it reads TGDSETNPAETLFIEEIFRR. Disulfide bonds link cysteine 42/cysteine 56, cysteine 49/cysteine 61, and cysteine 55/cysteine 71.

Belongs to the neurotoxin 35 family. In terms of tissue distribution, expressed by the venom gland.

The protein localises to the secreted. Functionally, putative ion channel inhibitor. The protein is U12-theraphotoxin-Hs1a of Cyriopagopus schmidti (Chinese bird spider).